A 411-amino-acid chain; its full sequence is LL-diaminopimelate aminotransferase (411 aa).

Tyr-15 and Gly-42 together coordinate substrate. Pyridoxal 5'-phosphate-binding positions include Tyr-72, 108–109, Tyr-132, Asn-187, Tyr-218, and 246–248; these read AK and SFS. Substrate is bound by residues Lys-109, Tyr-132, and Asn-187. Lys-249 is modified (N6-(pyridoxal phosphate)lysine). Pyridoxal 5'-phosphate-binding residues include Arg-257 and Asn-292. Asn-292 and Arg-388 together coordinate substrate.

The protein belongs to the class-I pyridoxal-phosphate-dependent aminotransferase family. LL-diaminopimelate aminotransferase subfamily. In terms of assembly, homodimer. The cofactor is pyridoxal 5'-phosphate.

It carries out the reaction (2S,6S)-2,6-diaminopimelate + 2-oxoglutarate = (S)-2,3,4,5-tetrahydrodipicolinate + L-glutamate + H2O + H(+). It functions in the pathway amino-acid biosynthesis; L-lysine biosynthesis via DAP pathway; LL-2,6-diaminopimelate from (S)-tetrahydrodipicolinate (aminotransferase route): step 1/1. In terms of biological role, involved in the synthesis of meso-diaminopimelate (m-DAP or DL-DAP), required for both lysine and peptidoglycan biosynthesis. Catalyzes the direct conversion of tetrahydrodipicolinate to LL-diaminopimelate. This is LL-diaminopimelate aminotransferase from Rippkaea orientalis (strain PCC 8801 / RF-1) (Cyanothece sp. (strain PCC 8801)).